Here is a 274-residue protein sequence, read N- to C-terminus: NADH-ubiquinone oxidoreductase chain 2 (274 aa).

Transmembrane regions (helical) follow at residues 28 to 48 (MIIMSALLLKSGAAPFHFWFP), 54 to 74 (LTWMNALVLMTWQKIAPLMLI), 79 to 99 (IKYLLLISVILSVIIGAIGGL), 107 to 127 (LMAFSSINHLGWMLSSLMISE), 128 to 148 (SIWLIYFFFYSFLSFVLTFMF), 171 to 191 (FTLFMNFLSLGGLPPFLGFLP), 206 to 226 (FLLLLMMMSTLITLFFYLRIC), and 254 to 274 (LIMTFFSIFGLFMISLFYFMF).

The protein belongs to the complex I subunit 2 family.

The protein localises to the mitochondrion inner membrane. It carries out the reaction a ubiquinone + NADH + 5 H(+)(in) = a ubiquinol + NAD(+) + 4 H(+)(out). Core subunit of the mitochondrial membrane respiratory chain NADH dehydrogenase (Complex I) that is believed to belong to the minimal assembly required for catalysis. Complex I functions in the transfer of electrons from NADH to the respiratory chain. The immediate electron acceptor for the enzyme is believed to be ubiquinone. The protein is NADH-ubiquinone oxidoreductase chain 2 (mt:ND2) of Drosophila mauritiana (Fruit fly).